The chain runs to 155 residues: Small ribosomal subunit protein uS7 (155 aa).

Belongs to the universal ribosomal protein uS7 family. As to quaternary structure, part of the 30S ribosomal subunit. Contacts proteins S9 and S11.

One of the primary rRNA binding proteins, it binds directly to 16S rRNA where it nucleates assembly of the head domain of the 30S subunit. Is located at the subunit interface close to the decoding center, probably blocks exit of the E-site tRNA. This Chlorobium limicola (strain DSM 245 / NBRC 103803 / 6330) protein is Small ribosomal subunit protein uS7.